A 161-amino-acid chain; its full sequence is Large ribosomal subunit protein uL15 (161 aa).

Positions Met1–Leu57 are disordered. The span at Ile23 to Met35 shows a compositional bias: gly residues.

The protein belongs to the universal ribosomal protein uL15 family. Part of the 50S ribosomal subunit.

Functionally, binds to the 23S rRNA. The sequence is that of Large ribosomal subunit protein uL15 from Trichodesmium erythraeum (strain IMS101).